Consider the following 279-residue polypeptide: Lyso-glycine lipid O-acyltransferase (279 aa).

Belongs to the O-acyltransferase GlsA family.

It carries out the reaction a lyso-glycine lipid + a fatty acyl-[ACP] = a glycine lipid + holo-[ACP]. The catalysed reaction is N-[(3R)-3-hydroxyhexadecanoyl]-glycine + hexadecanoyl-[ACP] = N-[(3R)-3-(hexadecanoyloxy)hexadecanoyl]-glycine + holo-[ACP]. It functions in the pathway lipid metabolism. Is involved in the production of glycine lipids (GL), which are phosphorus-free membrane lipids. Catalyzes the second step of GL biosynthesis, i.e. the O-acylation of the hydroxyl group of lyso-glycine lipids, resulting in the production of the mature diacylated glycine lipids. The polypeptide is Lyso-glycine lipid O-acyltransferase (Phocaeicola vulgatus (strain ATCC 8482 / DSM 1447 / JCM 5826 / CCUG 4940 / NBRC 14291 / NCTC 11154) (Bacteroides vulgatus)).